The sequence spans 175 residues: ATP synthase subunit b, chloroplastic (175 aa).

Residues L21–G40 form a helical membrane-spanning segment.

It belongs to the ATPase B chain family. In terms of assembly, F-type ATPases have 2 components, F(1) - the catalytic core - and F(0) - the membrane proton channel. F(1) has five subunits: alpha(3), beta(3), gamma(1), delta(1), epsilon(1). F(0) has four main subunits: a(1), b(1), b'(1) and c(10-14). The alpha and beta chains form an alternating ring which encloses part of the gamma chain. F(1) is attached to F(0) by a central stalk formed by the gamma and epsilon chains, while a peripheral stalk is formed by the delta, b and b' chains.

The protein resides in the plastid. It localises to the chloroplast thylakoid membrane. Its function is as follows. F(1)F(0) ATP synthase produces ATP from ADP in the presence of a proton or sodium gradient. F-type ATPases consist of two structural domains, F(1) containing the extramembraneous catalytic core and F(0) containing the membrane proton channel, linked together by a central stalk and a peripheral stalk. During catalysis, ATP synthesis in the catalytic domain of F(1) is coupled via a rotary mechanism of the central stalk subunits to proton translocation. Functionally, component of the F(0) channel, it forms part of the peripheral stalk, linking F(1) to F(0). This chain is ATP synthase subunit b, chloroplastic, found in Cyanidium caldarium (Red alga).